A 332-amino-acid polypeptide reads, in one-letter code: Transaldolase (332 aa).

Lysine 136 (schiff-base intermediate with substrate) is an active-site residue.

This sequence belongs to the transaldolase family. Type 1 subfamily.

It localises to the cytoplasm. The enzyme catalyses D-sedoheptulose 7-phosphate + D-glyceraldehyde 3-phosphate = D-erythrose 4-phosphate + beta-D-fructose 6-phosphate. The protein operates within carbohydrate degradation; pentose phosphate pathway; D-glyceraldehyde 3-phosphate and beta-D-fructose 6-phosphate from D-ribose 5-phosphate and D-xylulose 5-phosphate (non-oxidative stage): step 2/3. In terms of biological role, transaldolase is important for the balance of metabolites in the pentose-phosphate pathway. This chain is Transaldolase, found in Trichormus variabilis (strain ATCC 29413 / PCC 7937) (Anabaena variabilis).